The sequence spans 698 residues: Polyribonucleotide nucleotidyltransferase (698 aa).

Asp485 and Asp491 together coordinate Mg(2+). The region spanning 552 to 611 (PRITTIKINPEKIRDVIGKGGAVIRALTEETGTTIELDDDGTVKIASSNGEATKEAIRRI) is the KH domain. In terms of domain architecture, S1 motif spans 621 to 689 (GRVYNGKVIR…RQGRVRLSIK (69 aa)).

Belongs to the polyribonucleotide nucleotidyltransferase family. In terms of assembly, component of the RNA degradosome, which is a multiprotein complex involved in RNA processing and mRNA degradation. Mg(2+) is required as a cofactor.

Its subcellular location is the cytoplasm. The catalysed reaction is RNA(n+1) + phosphate = RNA(n) + a ribonucleoside 5'-diphosphate. Functionally, involved in mRNA degradation. Catalyzes the phosphorolysis of single-stranded polyribonucleotides processively in the 3'- to 5'-direction. In Shewanella denitrificans (strain OS217 / ATCC BAA-1090 / DSM 15013), this protein is Polyribonucleotide nucleotidyltransferase.